A 491-amino-acid polypeptide reads, in one-letter code: Glutamate--tRNA ligase (491 aa).

The 'HIGH' region motif lies at 12–22 (PSPTGTPHVGL). The interval 111 to 134 (STPEEVEERHKAAGRDPKLGYDNF) is disordered. The segment covering 117-134 (EERHKAAGRDPKLGYDNF) has biased composition (basic and acidic residues). A 'KMSKS' region motif is present at residues 256–260 (KLSKR). K259 is an ATP binding site.

It belongs to the class-I aminoacyl-tRNA synthetase family. Glutamate--tRNA ligase type 1 subfamily. Monomer.

The protein localises to the cytoplasm. It carries out the reaction tRNA(Glu) + L-glutamate + ATP = L-glutamyl-tRNA(Glu) + AMP + diphosphate. Functionally, catalyzes the attachment of glutamate to tRNA(Glu) in a two-step reaction: glutamate is first activated by ATP to form Glu-AMP and then transferred to the acceptor end of tRNA(Glu). This is Glutamate--tRNA ligase from Rhodococcus jostii (strain RHA1).